Here is a 248-residue protein sequence, read N- to C-terminus: Anamorsin homolog (248 aa).

The interval 4-129 is N-terminal SAM-like domain; sequence FKGLQKSLYI…ETGSSARLSF (126 aa). The tract at residues 130-161 is linker; sequence AKKNASAVNVWKISGDDEELIDEEELLDEEDK. The [2Fe-2S] cluster site is built by cysteine 172, cysteine 181, cysteine 184, and cysteine 186. A fe-S binding site A region spans residues 172–186; it reads CSTTGKRKACKNCSC. [4Fe-4S] cluster is bound by residues cysteine 209, cysteine 212, cysteine 220, and cysteine 223. 2 short sequence motifs (cx2C motif) span residues 209–212 and 220–223; these read CGNC and CSTC. Positions 209 to 223 are fe-S binding site B; the sequence is CGNCYLGDAFRCSTC.

The protein belongs to the anamorsin family. As to quaternary structure, monomer. Requires [2Fe-2S] cluster as cofactor. The cofactor is [4Fe-4S] cluster.

It is found in the cytoplasm. The protein localises to the mitochondrion intermembrane space. In terms of biological role, component of the cytosolic iron-sulfur (Fe-S) protein assembly (CIA) machinery. Required for the maturation of extramitochondrial Fe-S proteins. Part of an electron transfer chain functioning in an early step of cytosolic Fe-S biogenesis, facilitating the de novo assembly of a [4Fe-4S] cluster on the cytosolic Fe-S scaffold complex. Electrons are transferred from NADPH via a FAD- and FMN-containing diflavin oxidoreductase. Together with the diflavin oxidoreductase, also required for the assembly of the diferric tyrosyl radical cofactor of ribonucleotide reductase (RNR), probably by providing electrons for reduction during radical cofactor maturation in the catalytic small subunit. The protein is Anamorsin homolog of Drosophila melanogaster (Fruit fly).